Here is a 128-residue protein sequence, read N- to C-terminus: Large-conductance mechanosensitive channel (128 aa).

The Cytoplasmic segment spans residues 1–16 (MNFIKEFREFAMRGNV). Residues 17–45 (VDMAVGVIIGSAFGKIVSSLVSDIFTPVL) traverse the membrane as a helical segment. Topologically, residues 46–74 (GILTGGIDFKDMKFVLAQAQGDVPAVTLN) are periplasmic. Residues 75–94 (YGLFIQNVIDFIIIAFAIFM) traverse the membrane as a helical segment. The Cytoplasmic portion of the chain corresponds to 95-128 (MIKVINKVRKPEEKKTAPKAETLLTEIRDLLKNK).

The protein belongs to the MscL family. Homopentamer.

The protein localises to the cell inner membrane. Functionally, channel that opens in response to stretch forces in the membrane lipid bilayer. Forms a nonselective ion channel with a conductance of about 4 nanosiemens. May participate in the regulation of osmotic pressure changes within the cell. In Haemophilus influenzae (strain ATCC 51907 / DSM 11121 / KW20 / Rd), this protein is Large-conductance mechanosensitive channel.